The sequence spans 345 residues: UDP-N-acetylenolpyruvoylglucosamine reductase (345 aa).

Positions 16-185 constitute an FAD-binding PCMH-type domain; sequence VNAFAKSVVT…VSVGLRLCKK (170 aa). R162 is an active-site residue. S231 (proton donor) is an active-site residue. E328 is an active-site residue.

This sequence belongs to the MurB family. It depends on FAD as a cofactor.

The protein localises to the cytoplasm. It carries out the reaction UDP-N-acetyl-alpha-D-muramate + NADP(+) = UDP-N-acetyl-3-O-(1-carboxyvinyl)-alpha-D-glucosamine + NADPH + H(+). It functions in the pathway cell wall biogenesis; peptidoglycan biosynthesis. Cell wall formation. The polypeptide is UDP-N-acetylenolpyruvoylglucosamine reductase (Blochmanniella pennsylvanica (strain BPEN)).